The chain runs to 1825 residues: Proteasome activator complex subunit 4B (1825 aa).

6 HEAT repeats span residues 458–502 (PEGP…LVDC), 981–1020 (NFCC…NHCG), 1162–1200 (YPLP…QLKR), 1336–1374 (DAFL…GSKH), 1618–1656 (PEQI…YNLF), and 1662–1700 (EQCV…CNFL). The bromodomain-like (BRDL) stretch occupies residues 1632-1720 (AGSSSWHARY…EALCKTRLPK (89 aa)).

Belongs to the BLM10 family. Homodimer. Interacts with the 20S and 26S proteasomes.

It is found in the cytoplasm. The protein resides in the cytosol. The protein localises to the nucleus. It localises to the nucleus speckle. In terms of biological role, associated component of the proteasome that specifically recognizes acetylated histones and promotes ATP- and ubiquitin-independent degradation of core histones during DNA damage response. Recognizes and binds acetylated histones via its bromodomain-like (BRDL) region and activates the proteasome by opening the gated channel for substrate entry. Binds to the core proteasome via its C-terminus, which occupies the same binding sites as the proteasomal ATPases, opening the closed structure of the proteasome via an active gating mechanism. involved in DNA damage response in somatic cells: binds to acetylated histones and promotes degradation of histones. The polypeptide is Proteasome activator complex subunit 4B (psme4b) (Danio rerio (Zebrafish)).